The primary structure comprises 172 residues: RNA silencing suppressor p19 (172 aa).

The segment covering 1–20 (MERAIQGNDTREQANGERWD) has biased composition (basic and acidic residues). Residues 1 to 27 (MERAIQGNDTREQANGERWDGGSGGIT) form a disordered region.

This sequence belongs to the tombusvirus protein p19 family. In terms of assembly, homodimer.

Acts as a suppressor of RNA-mediated gene silencing, also known as post-transcriptional gene silencing (PTGS), a mechanism of plant viral defense that limits the accumulation of viral RNAs. Binds to short interfering RNAs (siRNAs) with high affinity. Acts as a molecular caliper to specifically select siRNAs based on the length of the duplex region of the RNA. This Dianthus caryophyllus (Carnation) protein is RNA silencing suppressor p19.